Here is a 573-residue protein sequence, read N- to C-terminus: MPQQWPATDIARLILDGFDDYREHFRRITDGARERFEQARWQDTQTASAARINLYEEKVGETVARLREYFEPDTLMDVTCWPLVKSAYISIIDLRFDDELSETWYNSIFCSLFSHDLISDGCMFIHTTRPSLRRARAAQTRTYKPQGQISGMLASIFADYRFSEAYADLPGDLLRLEAQLRENLPDWVCKDPELSVELFSSVLYRNKGAYLVGRIYTNDDQWPLVIPLLHREGRGIQIDALITDEAEVSIIFSFTRSYFMVDVPVPAEFIGFLKRILPGKHIAELYTSIGFYKHGKSEFYRALINHLANTDDQFIMAPGVRGMVMSVFTLPGFNTVFKIIKDRFSPSKNVDRATVIEKYRLVKSVDRVGRMADTQEFADFRFPLSKFEPACLAELLEVAPSTVSLEGETVLIRHCWTERRMTPLNLYLDNANEAQVREALEDYGLAIKQLAAANIFPGDMLLKNFGVTRHGRVVFYDYDEICFLTEANFRHIPAPRTPEDEMASEPWYSIGPLDVFPEEFPPFLFADAAQRKLFDQLHGELYNADYWKGLQEAIRAGKVIDVFPYRRKGLDNE.

ATP-binding positions include 317–323 and lysine 338; that span reads APGVRGM. Aspartate 373 is a catalytic residue.

The protein belongs to the AceK family.

Its subcellular location is the cytoplasm. The catalysed reaction is L-seryl-[isocitrate dehydrogenase] + ATP = O-phospho-L-seryl-[isocitrate dehydrogenase] + ADP + H(+). Functionally, bifunctional enzyme which can phosphorylate or dephosphorylate isocitrate dehydrogenase (IDH) on a specific serine residue. This is a regulatory mechanism which enables bacteria to bypass the Krebs cycle via the glyoxylate shunt in response to the source of carbon. When bacteria are grown on glucose, IDH is fully active and unphosphorylated, but when grown on acetate or ethanol, the activity of IDH declines drastically concomitant with its phosphorylation. The sequence is that of Isocitrate dehydrogenase kinase/phosphatase from Pseudomonas fluorescens (strain Pf0-1).